The primary structure comprises 3718 residues: Laminin subunit alpha-5 (3718 aa).

A signal peptide spans 1–40 (MAKRGGQLCAGSAPGALGPRSPAPRPLLLLLAGLALVGEA). Positions 46–304 (DGFSLHPPYF…SIKDISIGGR (259 aa)) constitute a Laminin N-terminal domain. Asn-100, Asn-148, and Asn-248 each carry an N-linked (GlcNAc...) asparagine glycan. 12 disulfide bridges follow: Cys-305–Cys-314, Cys-307–Cys-327, Cys-329–Cys-338, Cys-341–Cys-361, Cys-364–Cys-373, Cys-366–Cys-398, Cys-401–Cys-410, Cys-413–Cys-431, Cys-434–Cys-445, Cys-436–Cys-452, Cys-454–Cys-463, and Cys-466–Cys-476. 3 consecutive Laminin EGF-like domains span residues 305–363 (CVCH…ECQS), 364–433 (CNCH…VCRP), and 434–479 (CDCE…CYPL). Asn-383 carries N-linked (GlcNAc...) asparagine glycosylation. Asn-457 carries an N-linked (GlcNAc...) asparagine glycan. A glycan (N-linked (GlcNAc...) asparagine) is linked at Asn-485. 29 cysteine pairs are disulfide-bonded: Cys-500–Cys-512, Cys-502–Cys-521, Cys-523–Cys-532, Cys-535–Cys-544, Cys-547–Cys-559, Cys-549–Cys-566, Cys-568–Cys-577, Cys-580–Cys-590, Cys-593–Cys-605, Cys-595–Cys-611, Cys-613–Cys-622, Cys-625–Cys-635, Cys-638–Cys-650, Cys-640–Cys-656, Cys-658–Cys-667, Cys-670–Cys-680, Cys-683–Cys-695, Cys-685–Cys-702, Cys-704–Cys-713, Cys-716–Cys-731, Cys-752–Cys-761, Cys-764–Cys-779, Cys-782–Cys-796, Cys-784–Cys-802, Cys-804–Cys-813, Cys-816–Cys-831, Cys-834–Cys-846, Cys-836–Cys-853, and Cys-855–Cys-864. Laminin EGF-like domains follow at residues 500 to 546 (CDCN…SCHP), 547 to 592 (CQCS…LCQL), 593 to 637 (CGCS…DCHA), 638 to 682 (CACD…SCIP), 683 to 728 (CHCS…YCEA), 729 to 781 (GSCH…GCTR), and 782 to 833 (CSCD…GCRS). The 22-residue stretch at 834–855 (CRCDVGGALGQGCEPKTGACRC) folds into the Laminin EGF-like 11; truncated domain. The interval 856–1442 (RPNTQGPTCS…SLFYNNGALP (587 aa)) is domain IV 1 (domain IV B). Residues Asn-905, Asn-926, and Asn-964 are each glycosylated (N-linked (GlcNAc...) asparagine). The interval 1253–1284 (LTQSQELSPGAPPEGPQPRPPTAVDPNAEPTL) is disordered. Positions 1262 to 1275 (GAPPEGPQPRPPTA) are enriched in pro residues. Asn-1335 carries an N-linked (GlcNAc...) asparagine glycan. Disulfide bonds link Cys-1443–Cys-1455, Cys-1445–Cys-1462, Cys-1464–Cys-1473, Cys-1476–Cys-1486, Cys-1489–Cys-1496, Cys-1491–Cys-1503, Cys-1505–Cys-1514, Cys-1517–Cys-1530, Cys-1533–Cys-1548, Cys-1535–Cys-1555, Cys-1557–Cys-1566, Cys-1569–Cys-1579, Cys-1582–Cys-1594, Cys-1584–Cys-1601, Cys-1603–Cys-1612, and Cys-1615–Cys-1630. Laminin EGF-like domains lie at 1443–1488 (CGCH…NCRP), 1489–1532 (CDCG…GCEE), 1533–1581 (CNCS…SCRP), and 1582–1632 (CDCH…GCTR). An N-linked (GlcNAc...) asparagine glycan is attached at Asn-1534. The Laminin EGF-like 16; first part domain occupies 1633-1642 (CFCFGATERC). Residues 1646 to 1831 (NLARHEFVDM…RGPPASNVEL (186 aa)) form the Laminin IV type A domain. 2 short sequence motifs (cell attachment site) span residues 1723 to 1725 (RGD) and 1839 to 1841 (RGD). In terms of domain architecture, Laminin EGF-like 16; second part spans 1832–1864 (CMCPANYRGDSCQECAPGYYRDTKGLFLGRCVP). Cystine bridges form between Cys-1865–Cys-1874, Cys-1867–Cys-1881, Cys-1884–Cys-1893, Cys-1896–Cys-1912, Cys-1915–Cys-1930, Cys-1917–Cys-1939, Cys-1941–Cys-1950, Cys-1953–Cys-1968, Cys-1971–Cys-1986, Cys-1973–Cys-1993, Cys-1996–Cys-2005, Cys-2008–Cys-2022, Cys-2025–Cys-2035, Cys-2027–Cys-2042, Cys-2044–Cys-2053, Cys-2056–Cys-2069, Cys-2072–Cys-2083, Cys-2074–Cys-2090, Cys-2092–Cys-2101, Cys-2104–Cys-2116, Cys-2119–Cys-2126, Cys-2121–Cys-2133, Cys-2135–Cys-2144, and Cys-2147–Cys-2166. 6 Laminin EGF-like domains span residues 1865-1914 (CQCH…PCVS), 1915-1970 (CPCP…SCQP), 1971-2024 (CDCS…NCTR), 2025-2071 (CDCS…GCRP), 2072-2118 (CACG…GCRR), and 2119-2168 (CQCP…HCEV). Asn-2021 carries an N-linked (GlcNAc...) asparagine glycan. The segment at 2169–2735 (CDHCVVLLLD…AQARSAASKV (567 aa)) is domain II and I. 7 N-linked (GlcNAc...) asparagine glycosylation sites follow: Asn-2198, Asn-2211, Asn-2365, Asn-2395, Asn-2425, Asn-2503, and Asn-2570. 2 coiled-coil regions span residues 2205-2257 (ARLH…SQAT) and 2330-2464 (TRDL…ASLD). Coiled-coil stretches lie at residues 2604–2621 (ARKN…AMLA) and 2639–2705 (AEAL…LENR). N-linked (GlcNAc...) asparagine glycosylation is present at Asn-2709. 5 Laminin G-like domains span residues 2736–2933 (KVSM…DKPC), 2947–3119 (GSYL…SFGC), 3128–3296 (TMTF…SVGC), 3337–3511 (AYQF…VTPC), and 3518–3689 (DGLF…MRGC). 2 disulfide bridges follow: Cys-2903-Cys-2933 and Cys-3094-Cys-3119. Asn-3111, Asn-3213, Asn-3261, and Asn-3291 each carry an N-linked (GlcNAc...) asparagine glycan. 2 disulfides stabilise this stretch: Cys-3265–Cys-3296 and Cys-3488–Cys-3511. 2 N-linked (GlcNAc...) asparagine glycosylation sites follow: Asn-3623 and Asn-3673. Cysteines 3661 and 3689 form a disulfide.

Laminin is a complex glycoprotein, consisting of three different polypeptide chains (alpha, beta, gamma), which are bound to each other by disulfide bonds into a cross-shaped molecule comprising one long and three short arms with globules at each end. Alpha-5 is a subunit of laminin-10 (laminin-511), laminin-11 (laminin-521) and laminin-15 (laminin-523). In adult, high levels in heart, lung, and kidney; lower in brain, muscle and testis; very low in liver, gut and skin.

The protein localises to the secreted. Its subcellular location is the extracellular space. It is found in the extracellular matrix. It localises to the basement membrane. Its function is as follows. Binding to cells via a high affinity receptor, laminin is thought to mediate the attachment, migration and organization of cells into tissues during embryonic development by interacting with other extracellular matrix components. Alpha-5 may be the major laminin alpha chain of adult epithelial and/or endothelial basal laminae. Plays a role in the regulation of skeletogenesis, through a mechanism that involves integrin-mediated signaling and PTK2B/PYK2. This is Laminin subunit alpha-5 (Lama5) from Mus musculus (Mouse).